Here is a 1948-residue protein sequence, read N- to C-terminus: Chromodomain-helicase-DNA-binding protein 5 (1948 aa).

Disordered stretches follow at residues 1–136, 228–268, and 281–336; these read MRGP…SGQL, SPQQ…GRGK, and SKRK…GDGY. 2 stretches are compositionally biased toward acidic residues: residues 17–37 and 71–89; these read EEME…EGFE and NDEL…ESEG. Basic residues-rich tracts occupy residues 95 to 114 and 250 to 268; these read TKKK…KRKK and GVRK…GRGK. The segment covering 289–299 has biased composition (acidic residues); the sequence is SEEDEPEDSDL. The segment covering 319–328 has biased composition (basic residues); that stretch reads KKNKRRRKKK. 2 consecutive PHD-type zinc fingers follow at residues 341–388 and 414–461; these read QDYC…CEKE and MEFC…CTCP. Positions 341–651 are histone-binding; it reads QDYCEVCQQG…HRELMLGEDA (311 aa). Residues 495–552 form the Chromo 1 domain; sequence MPPPRPLEGIPEREFFVKWAGLSYWHCSWVKELQLELYHTVMYRNYQRKNDMDEPPPF. The tract at residues 547-569 is disordered; sequence DEPPPFDYGSGDEDGKSEKRKNK. Residues 559 to 569 show a composition bias toward basic and acidic residues; it reads EDGKSEKRKNK. The Chromo 2 domain maps to 590 to 651; the sequence is MMVHRILNHS…HRELMLGEDA (62 aa). The 185-residue stretch at 710 to 894 folds into the Helicase ATP-binding domain; that stretch reads RFSWAQGTDT…FHLLNFLTPE (185 aa). 723 to 730 provides a ligand contact to ATP; that stretch reads DEMGLGKT. The DEAH box motif lies at 845–848; it reads DEAH. The region spanning 1026 to 1191 is the Helicase C-terminal domain; the sequence is LLQKMLKKLR…MTKQELDDIL (166 aa). 4 disordered regions span residues 1206-1250, 1349-1409, 1521-1566, and 1595-1692; these read MMSQ…VEDS, YNDA…LPPL, KYST…LPDK, and TALD…EDKN. Composition is skewed to acidic residues over residues 1353–1364 and 1374–1383; these read SQEDQEWQDELS and SEDEDEDFEE. Glutamine 1388 is modified (N5-methylglutamine). Positions 1547-1561 are enriched in pro residues; that stretch reads TPVPASPAQLPPAPL. Residue serine 1552 is modified to Phosphoserine. Basic and acidic residues-rich tracts occupy residues 1598–1625, 1633–1650, and 1657–1672; these read DRVE…EVEK, PLKE…DKLE, and NDFR…KEPT.

This sequence belongs to the SNF2/RAD54 helicase family. In terms of assembly, component of the nucleosome remodeling and deacetylase (NuRD) repressor complex, composed of core proteins MTA1, MTA2, MTA3, RBBP4, RBBP7, HDAC1, HDAC2, MBD2, MBD3, and peripherally associated proteins CDK2AP1, CDK2AP2, GATAD2A, GATAD2B, CHD3, CHD4 and CHD5. The exact stoichiometry of the NuRD complex is unknown, and some subunits such as MBD2 and MBD3, GATAD2A and GATAD2B, and CHD3, CHD4 and CHD5 define mutually exclusive NuRD complexes. Interacts with HDAC2. Post-translationally, methylated at Gln-1388 by N6AMT1. In terms of tissue distribution, expressed in brain regions enriched in neurons and not in regions rich in glial cells (at protein level).

Its subcellular location is the nucleus. It is found in the chromosome. The catalysed reaction is ATP + H2O = ADP + phosphate + H(+). In terms of biological role, ATP-dependent chromatin-remodeling factor that binds DNA through histones and regulates gene transcription. May specifically recognize and bind trimethylated 'Lys-27' (H3K27me3) and non-methylated 'Lys-4' of histone H3. Acts as a component of the histone deacetylase NuRD complex which participates in the remodeling of chromatin. Plays a role in the development of the nervous system by activating the expression of genes promoting neuron terminal differentiation. In parallel, it may also positively regulate the trimethylation of histone H3 at 'Lys-27' thereby specifically repressing genes that promote the differentiation into non-neuronal cell lineages. Regulates the expression of genes involved in cell proliferation and differentiation. Downstream activated genes may include CDKN2A that positively regulates the p53/TP53 pathway, which in turn, prevents cell proliferation. In spermatogenesis, it probably regulates histone hyperacetylation and the replacement of histones by transition proteins in chromatin, a crucial step in the condensation of spermatid chromatin and the production of functional spermatozoa. In Rattus norvegicus (Rat), this protein is Chromodomain-helicase-DNA-binding protein 5 (Chd5).